The chain runs to 559 residues: Pentatricopeptide repeat-containing protein At2g42920, chloroplastic (559 aa).

The N-terminal 14 residues, 1–14 (MSPTILSFSGVTVP), are a transit peptide targeting the chloroplast. PPR repeat units follow at residues 88–122 (NPFVWNTIIRGFSRSSFPEMAISIFIDMLCSSPSV), 125–159 (QRLTYPSVFKAYGRLGQARDGRQLHGMVIKEGLED), 160–190 (DSFIRNTMLHMYVTCGCLIEAWRIFLGMIGF), 191–221 (DVVAWNSMIMGFAKCGLIDQAQNLFDEMPQR), 222–256 (NGVSWNSMISGFVRNGRFKDALDMFREMQEKDVKP), 257–291 (DGFTMVSLLNACAYLGASEQGRWIHEYIVRNRFEL), 292–322 (NSIVVTALIDMYCKCGCIEEGLNVFECAPKK), 323–357 (QLSCWNSMILGLANNGFEERAMDLFSELERSGLEP), 358–388 (DSVSFIGVLTACAHSGEVHRADEFFRLMKEK), and 394–424 (SIKHYTLMVNVLGGAGLLEEAEALIKNMPVE). The tract at residues 429-504 (IWSSLLSACR…EVGCSSIEVD (76 aa)) is type E motif. Positions 505–535 (FEVHEFISCGGTHPKSAEIYSLLDILNWDVS) are type E(+) motif.

Belongs to the PPR family. PCMP-E subfamily.

The protein localises to the plastid. The protein resides in the chloroplast. The protein is Pentatricopeptide repeat-containing protein At2g42920, chloroplastic (PCMP-E75) of Arabidopsis thaliana (Mouse-ear cress).